A 117-amino-acid chain; its full sequence is NADH-ubiquinone oxidoreductase chain 3 (117 aa).

3 consecutive transmembrane segments (helical) span residues 3-23 (LLLTILFITTILSLILAIVSF), 56-76 (FFLVAILFLLFDLEIALLLPL), and 85-105 (PMFTLLWASALLIMLTLGLIY).

It belongs to the complex I subunit 3 family.

It is found in the mitochondrion membrane. It carries out the reaction a ubiquinone + NADH + 5 H(+)(in) = a ubiquinol + NAD(+) + 4 H(+)(out). Core subunit of the mitochondrial membrane respiratory chain NADH dehydrogenase (Complex I) that is believed to belong to the minimal assembly required for catalysis. Complex I functions in the transfer of electrons from NADH to the respiratory chain. The immediate electron acceptor for the enzyme is believed to be ubiquinone. The chain is NADH-ubiquinone oxidoreductase chain 3 (MT-ND3) from Tetraodon nigroviridis (Spotted green pufferfish).